The chain runs to 360 residues: Glutamate 5-kinase (360 aa).

K7 contributes to the ATP binding site. Positions 47, 134, and 146 each coordinate substrate. Residues 166-167 and 208-214 each bind ATP; these read TD and TGGIKTK. In terms of domain architecture, PUA spans 273–344; the sequence is VGEIHLDDGA…IGINSRSETT (72 aa).

It belongs to the glutamate 5-kinase family.

The protein resides in the cytoplasm. It catalyses the reaction L-glutamate + ATP = L-glutamyl 5-phosphate + ADP. It participates in amino-acid biosynthesis; L-proline biosynthesis; L-glutamate 5-semialdehyde from L-glutamate: step 1/2. In terms of biological role, catalyzes the transfer of a phosphate group to glutamate to form L-glutamate 5-phosphate. In Prochlorococcus marinus (strain NATL2A), this protein is Glutamate 5-kinase.